The chain runs to 206 residues: Small ribosomal subunit protein uS4 (206 aa).

The segment at Pro27–Arg47 is disordered. An S4 RNA-binding domain is found at Gln96–Ala158.

Belongs to the universal ribosomal protein uS4 family. Part of the 30S ribosomal subunit. Contacts protein S5. The interaction surface between S4 and S5 is involved in control of translational fidelity.

In terms of biological role, one of the primary rRNA binding proteins, it binds directly to 16S rRNA where it nucleates assembly of the body of the 30S subunit. With S5 and S12 plays an important role in translational accuracy. The protein is Small ribosomal subunit protein uS4 of Dichelobacter nodosus (strain VCS1703A).